Consider the following 275-residue polypeptide: 2,3,4,5-tetrahydropyridine-2,6-dicarboxylate N-succinyltransferase (275 aa).

Residues Arg104 and Asp141 each coordinate substrate.

It belongs to the transferase hexapeptide repeat family. Homotrimer.

It is found in the cytoplasm. The catalysed reaction is (S)-2,3,4,5-tetrahydrodipicolinate + succinyl-CoA + H2O = (S)-2-succinylamino-6-oxoheptanedioate + CoA. Its pathway is amino-acid biosynthesis; L-lysine biosynthesis via DAP pathway; LL-2,6-diaminopimelate from (S)-tetrahydrodipicolinate (succinylase route): step 1/3. This is 2,3,4,5-tetrahydropyridine-2,6-dicarboxylate N-succinyltransferase from Haemophilus influenzae (strain 86-028NP).